The sequence spans 295 residues: Aquaporin NIP2-1 (295 aa).

2 helical membrane-spanning segments follow: residues 49–69 (VVSE…AAGI) and 83–103 (SVAG…ISGA). The NPA 1 signature appears at 106-108 (NPA). The next 3 membrane-spanning stretches (helical) occupy residues 124-146 (VPFY…KAVL), 164-184 (SLVI…AVAT), and 192-212 (LAGL…GAVS). Positions 217-219 (NPA) match the NPA 2 motif. A helical membrane pass occupies residues 230 to 250 (LYTGLWIYFLGPVLGTLSGAW).

Belongs to the MIP/aquaporin (TC 1.A.8) family. NIP (TC 1.A.8.12) subfamily.

It is found in the membrane. Aquaporins facilitate the transport of water and small neutral solutes across cell membranes. The chain is Aquaporin NIP2-1 (NIP2-1) from Zea mays (Maize).